The chain runs to 52 residues: uncharacterized protein (52 aa).

This is an uncharacterized protein from Haemophilus influenzae (strain ATCC 51907 / DSM 11121 / KW20 / Rd).